Consider the following 2353-residue polypeptide: Otogelin-like protein (2353 aa).

Residues 1–31 (MNIVRKLNLMIPWSIFLLHVLLFSLQEYICA) form the signal peptide. Residues 121-297 (GICKTWGQYH…VQTPDDTKCV (177 aa)) enclose the VWFD 1 domain. 2 disulfides stabilise this stretch: cysteine 123–cysteine 257 and cysteine 145–cysteine 296. Asparagine 144 carries N-linked (GlcNAc...) asparagine glycosylation. In terms of domain architecture, TIL 1 spans 390-443 (CDDSFVHRDCISCCPPTCTFEKQCLGSNLHCLDGCYCPDGLVMDNGTCISLENC). N-linked (GlcNAc...) asparagine glycans are attached at residues asparagine 434 and asparagine 473. Residues 481 to 654 (VQCSVVGDSH…NAWRVSSTCF (174 aa)) form the VWFD 2 domain. Cystine bridges form between cysteine 483–cysteine 618, cysteine 505–cysteine 653, and cysteine 527–cysteine 535. In terms of domain architecture, TIL 2 spans 745–800 (CQKGMLYHHCSSFCLHSCISLSSPEQCSDDCAEGCNCPEGKFYEDTLNFCVPIFHC). N-linked (GlcNAc...) asparagine glycosylation is found at asparagine 826 and asparagine 876. Residues 946-1115 (AVCTIYGDRH…SWALGQCESP (170 aa)) form the VWFD 3 domain. 2 disulfide bridges follow: cysteine 948/cysteine 1078 and cysteine 992/cysteine 999. Asparagine 1289, asparagine 1604, and asparagine 2198 each carry an N-linked (GlcNAc...) asparagine glycan. The VWFD 4 domain occupies 1534-1723 (CRCSMLSELS…SWEIEKSFEV (190 aa)). An intrachain disulfide couples cysteine 1536 to cysteine 1683. 4 disulfide bridges follow: cysteine 2261–cysteine 2317, cysteine 2282–cysteine 2331, cysteine 2293–cysteine 2348, and cysteine 2297–cysteine 2350. Positions 2261–2353 (CKREERICQK…EPIDCTCQWN (93 aa)) constitute a CTCK domain.

The protein belongs to the otogelin family. Expressed at high levels in fetal inner ear and heart. Low levels in fetal skeletal muscle, kidney, spleen and colon. Not detected in fetal liver, lung, brain, nor in fetal stomach. In adult tissues, highest levels in brain, kidney, heart and retina. Relatively low levels in lung, spleen and duodenum. Not detected in adult skeletal muscle, liver, nor testis.

It is found in the secreted. The sequence is that of Otogelin-like protein (OTOGL) from Homo sapiens (Human).